The following is a 267-amino-acid chain: Orotidine 5'-phosphate decarboxylase (267 aa).

Residues D40, 62 to 64 (KTH), 93 to 102 (DRKFADIGNT), Y215, and R234 contribute to the substrate site. Catalysis depends on K95, which acts as the Proton donor.

Belongs to the OMP decarboxylase family.

It catalyses the reaction orotidine 5'-phosphate + H(+) = UMP + CO2. It participates in pyrimidine metabolism; UMP biosynthesis via de novo pathway; UMP from orotate: step 2/2. This Phycomyces blakesleeanus (strain ATCC 8743b / DSM 1359 / FGSC 10004 / NBRC 33097 / NRRL 1555) protein is Orotidine 5'-phosphate decarboxylase (pyrG).